The following is a 337-amino-acid chain: Ribose-phosphate pyrophosphokinase 4 (337 aa).

Ser-2 carries the post-translational modification N-acetylserine. Mg(2+) is bound by residues Asp-158 and His-160. Residues 241-256 (GCHVVIVDDLVQSGGT) are binding of phosphoribosylpyrophosphate.

The protein belongs to the ribose-phosphate pyrophosphokinase family.

The catalysed reaction is D-ribose 5-phosphate + ATP = 5-phospho-alpha-D-ribose 1-diphosphate + AMP + H(+). The sequence is that of Ribose-phosphate pyrophosphokinase 4 (PRS4) from Arabidopsis thaliana (Mouse-ear cress).